The primary structure comprises 493 residues: Kelch-like protein 42 (493 aa).

Residues 5–77 form the BTB domain; sequence EMVQIRLEDR…INAGGAREGW (73 aa). 6 Kelch repeats span residues 183-241, 242-289, 291-332, 334-379, 381-436, and 438-487; these read VLVA…ILDN, YLFI…AVNS, LYAI…ECKG, IYVI…SVEE, IYIV…ALHN, and GIYI…SLYL.

As to quaternary structure, component of the BCR(KLHL42) E3 ubiquitin ligase complex, at least composed of CUL3 and KLHL42. Interacts (via the BTB domain) with CUL3. Interacts (via the kelch domains) with KATNA1.

The protein localises to the cytoplasm. It localises to the cytoskeleton. It is found in the spindle. It functions in the pathway protein modification; protein ubiquitination. In terms of biological role, substrate-specific adapter of a BCR (BTB-CUL3-RBX1) E3 ubiquitin-protein ligase complex required for mitotic progression and cytokinesis. The BCR(KLHL42) E3 ubiquitin ligase complex mediates the ubiquitination and subsequent degradation of KATNA1. Involved in microtubule dynamics throughout mitosis. The chain is Kelch-like protein 42 (Klhl42) from Mus musculus (Mouse).